We begin with the raw amino-acid sequence, 488 residues long: UDP-N-acetylmuramate--L-alanine ligase (488 aa).

An ATP-binding site is contributed by 129–135; the sequence is GSHGKTT.

The protein belongs to the MurCDEF family.

The protein localises to the cytoplasm. The catalysed reaction is UDP-N-acetyl-alpha-D-muramate + L-alanine + ATP = UDP-N-acetyl-alpha-D-muramoyl-L-alanine + ADP + phosphate + H(+). It functions in the pathway cell wall biogenesis; peptidoglycan biosynthesis. In terms of biological role, cell wall formation. The polypeptide is UDP-N-acetylmuramate--L-alanine ligase (Prochlorococcus marinus (strain MIT 9313)).